The primary structure comprises 605 residues: DNA mismatch repair protein MutL (605 aa).

Belongs to the DNA mismatch repair MutL/HexB family.

In terms of biological role, this protein is involved in the repair of mismatches in DNA. It is required for dam-dependent methyl-directed DNA mismatch repair. May act as a 'molecular matchmaker', a protein that promotes the formation of a stable complex between two or more DNA-binding proteins in an ATP-dependent manner without itself being part of a final effector complex. The polypeptide is DNA mismatch repair protein MutL (Rhizobium meliloti (strain 1021) (Ensifer meliloti)).